A 75-amino-acid polypeptide reads, in one-letter code: CDC42 small effector protein 1 (75 aa).

Residues C10 and C11 are each lipidated (S-palmitoyl cysteine). Residues 30 to 43 (IGEPTNFVHLTHIG) form the CRIB domain. The tract at residues 45-75 (GEMADGMQPSGPIKEQMRSKVPHANGRNSLL) is disordered.

Belongs to the CDC42SE/SPEC family.

Its subcellular location is the cytoplasm. The protein localises to the cytoskeleton. It localises to the cell membrane. In terms of biological role, probably involved in the organization of the actin cytoskeleton by acting downstream of CDC42, inducing actin filament assembly. The polypeptide is CDC42 small effector protein 1 (cdc42se1) (Danio rerio (Zebrafish)).